Here is a 374-residue protein sequence, read N- to C-terminus: Large ribosomal subunit protein uL4 (374 aa).

A disordered region spans residues Glu-336–Ala-355.

Belongs to the universal ribosomal protein uL4 family.

The sequence is that of Large ribosomal subunit protein uL4 (RPL4) from Trypanosoma brucei brucei.